Here is a 500-residue protein sequence, read N- to C-terminus: Probable malate:quinone oxidoreductase (500 aa).

Belongs to the MQO family. FAD serves as cofactor.

It carries out the reaction (S)-malate + a quinone = a quinol + oxaloacetate. The protein operates within carbohydrate metabolism; tricarboxylic acid cycle; oxaloacetate from (S)-malate (quinone route): step 1/1. The polypeptide is Probable malate:quinone oxidoreductase (Bacillus cereus (strain ZK / E33L)).